We begin with the raw amino-acid sequence, 334 residues long: Fructose-1,6-bisphosphatase class 1 (334 aa).

Glu-90, Asp-113, Leu-115, and Asp-116 together coordinate Mg(2+). Residues 116–119 (DGSS), Asn-209, Tyr-242, and Lys-272 contribute to the substrate site. Glu-278 contacts Mg(2+).

It belongs to the FBPase class 1 family. Homotetramer. It depends on Mg(2+) as a cofactor.

The protein resides in the cytoplasm. The enzyme catalyses beta-D-fructose 1,6-bisphosphate + H2O = beta-D-fructose 6-phosphate + phosphate. It participates in carbohydrate biosynthesis; gluconeogenesis. The sequence is that of Fructose-1,6-bisphosphatase class 1 from Actinobacillus pleuropneumoniae serotype 5b (strain L20).